The sequence spans 208 residues: High frequency lysogenization protein HflD homolog (208 aa).

Residues 91-125 are a coiled coil; the sequence is LMVLERKLNANKQAMNQLGERLGQLERQLAHFDLE.

Belongs to the HflD family.

The protein resides in the cytoplasm. It localises to the cell inner membrane. The sequence is that of High frequency lysogenization protein HflD homolog from Serratia proteamaculans (strain 568).